The following is a 270-amino-acid chain: Formamidopyrimidine-DNA glycosylase (270 aa).

The active-site Schiff-base intermediate with DNA is Pro2. Catalysis depends on Glu3, which acts as the Proton donor. Residue Lys57 is the Proton donor; for beta-elimination activity of the active site. His90, Arg109, and Lys150 together coordinate DNA. Residues 235–269 (LVYGNKDKPCPRCGTKIKSIIIGQRNSFFCPQCQK) form an FPG-type zinc finger. Arg259 acts as the Proton donor; for delta-elimination activity in catalysis.

The protein belongs to the FPG family. In terms of assembly, monomer. It depends on Zn(2+) as a cofactor.

It carries out the reaction Hydrolysis of DNA containing ring-opened 7-methylguanine residues, releasing 2,6-diamino-4-hydroxy-5-(N-methyl)formamidopyrimidine.. The enzyme catalyses 2'-deoxyribonucleotide-(2'-deoxyribose 5'-phosphate)-2'-deoxyribonucleotide-DNA = a 3'-end 2'-deoxyribonucleotide-(2,3-dehydro-2,3-deoxyribose 5'-phosphate)-DNA + a 5'-end 5'-phospho-2'-deoxyribonucleoside-DNA + H(+). Functionally, involved in base excision repair of DNA damaged by oxidation or by mutagenic agents. Acts as a DNA glycosylase that recognizes and removes damaged bases. Has a preference for oxidized purines, such as 7,8-dihydro-8-oxoguanine (8-oxoG). Has AP (apurinic/apyrimidinic) lyase activity and introduces nicks in the DNA strand. Cleaves the DNA backbone by beta-delta elimination to generate a single-strand break at the site of the removed base with both 3'- and 5'-phosphates. In Histophilus somni (strain 129Pt) (Haemophilus somnus), this protein is Formamidopyrimidine-DNA glycosylase.